Reading from the N-terminus, the 320-residue chain is ATP-dependent 6-phosphofructokinase (320 aa).

Glycine 11 contributes to the ATP binding site. Position 21 to 25 (arginine 21 to lysine 25) interacts with ADP. ATP-binding positions include arginine 72–phenylalanine 73 and glycine 102–serine 105. Aspartate 103 lines the Mg(2+) pocket. Threonine 125–aspartate 127 serves as a coordination point for substrate. The active-site Proton acceptor is aspartate 127. Arginine 154 provides a ligand contact to ADP. Substrate is bound by residues arginine 162 and methionine 169 to arginine 171. ADP-binding positions include glycine 185 to aspartate 187 and lysine 213 to histidine 215. Residues glutamate 222, arginine 243, and histidine 249–arginine 252 each bind substrate.

Belongs to the phosphofructokinase type A (PFKA) family. ATP-dependent PFK group I subfamily. Prokaryotic clade 'B1' sub-subfamily. In terms of assembly, homotetramer. Mg(2+) is required as a cofactor.

Its subcellular location is the cytoplasm. It carries out the reaction beta-D-fructose 6-phosphate + ATP = beta-D-fructose 1,6-bisphosphate + ADP + H(+). It functions in the pathway carbohydrate degradation; glycolysis; D-glyceraldehyde 3-phosphate and glycerone phosphate from D-glucose: step 3/4. Allosterically activated by ADP and other diphosphonucleosides, and allosterically inhibited by phosphoenolpyruvate. Catalyzes the phosphorylation of D-fructose 6-phosphate to fructose 1,6-bisphosphate by ATP, the first committing step of glycolysis. This is ATP-dependent 6-phosphofructokinase from Lactobacillus acidophilus (strain ATCC 700396 / NCK56 / N2 / NCFM).